A 394-amino-acid polypeptide reads, in one-letter code: NADH dehydrogenase [ubiquinone] iron-sulfur protein 2 (394 aa).

Polar residues predominate over residues 1–16 (MTTKNRQIKNFTSNFG). The interval 1–22 (MTTKNRQIKNFTSNFGPQHPAA) is disordered.

Belongs to the complex I 49 kDa subunit family. Complex I is composed of about 45 different subunits. This is a component of the iron-sulfur (IP) fragment of the enzyme.

The protein localises to the mitochondrion. The enzyme catalyses a ubiquinone + NADH + 5 H(+)(in) = a ubiquinol + NAD(+) + 4 H(+)(out). Its function is as follows. Core subunit of the mitochondrial membrane respiratory chain NADH dehydrogenase (Complex I) that is believed to belong to the minimal assembly required for catalysis. Complex I functions in the transfer of electrons from NADH to the respiratory chain. The immediate electron acceptor for the enzyme is believed to be ubiquinone. Component of the iron-sulfur (IP) fragment of the enzyme. The sequence is that of NADH dehydrogenase [ubiquinone] iron-sulfur protein 2 (NAD7) from Nicotiana sylvestris (Wood tobacco).